Reading from the N-terminus, the 1880-residue chain is Gag-Pro-Pol polyprotein (1880 aa).

Gly-2 carries the N-myristoyl glycine; by host lipid modification. Disordered stretches follow at residues 115–208 (HSRP…DQLN), 323–376 (SQGQ…THSY), and 446–469 (AERTRVRPPPKDGPLKIPGASPYQ). Composition is skewed to polar residues over residues 117 to 132 (RPPSRQAPVTITTSEK), 193 to 206 (NSKTLHNSGSQDDQ), and 323 to 334 (SQGQVSSNTTGR). The span at 346–366 (EEEEADSGESDSEDDEEESSE) shows a compositional bias: acidic residues. Residues 446-459 (AERTRVRPPPKDGP) are compositionally biased toward basic and acidic residues. Residues 863–939 (FSGILDTGAD…LPVNLWGRDI (77 aa)) form the Peptidase A2 domain. The active-site Protease; shared with dimeric partner is the Asp-868. The region spanning 950–996 (PNDTVMTQMLSQGYLPGQGLGKNNQGITQPITITPKKDKTGLGFHQN) is the G-patch domain. In terms of domain architecture, Reverse transcriptase spans 1044 to 1232 (LAAGHIEPTN…EPFSYLGFEL (189 aa)). Mg(2+) contacts are provided by Asp-1109, Asp-1184, Asp-1185, Asp-1464, Glu-1493, Asp-1514, and Asp-1578. An RNase H type-1 domain is found at 1455–1586 (IPQATLVFTD…ADAATQIFPI (132 aa)). The Integrase-type zinc-finger motif lies at 1589–1630 (DPIHEATQAHTLHHLNAHTLRLLYKITREQARDIVKACKQCV). Zn(2+)-binding residues include His-1598, His-1602, Cys-1626, and Cys-1629. Residues 1643–1804 (RGLVPNAIWQ…AADRLWHPQT (162 aa)) form the Integrase catalytic domain. Mg(2+)-binding residues include Asp-1654, Asp-1711, and Glu-1747. Positions 1809-1858 (ATVMWRDPLTSVWKGPDPVLIWGRGSACIYDQKEDGPRWLPERLIRHINN) form a DNA-binding region, integrase-type. Residues 1859–1880 (QTAPLCDRPSNPNTAPGPKGSP) form a disordered region.

In terms of assembly, homodimer. As to quaternary structure, interacts with the G-patch peptide. Interacts with the reverse transcriptase/ribonuclease H. In terms of assembly, homotrimer. It depends on Mg(2+) as a cofactor. Post-translationally, myristoylated. Myristoylation of the matrix (MA) domain mediates the transport and binding of Gag polyproteins to the host plasma membrane and is required for the assembly of viral particles. In terms of processing, specific enzymatic cleavages in vivo yield mature proteins. Released by autocatalytic processing. The protease can undergo further autoprocessing to yield 2 shorter but enzymatically active forms of 12 kDa and 13 kDa.

The protein localises to the virion. The catalysed reaction is DNA(n) + a 2'-deoxyribonucleoside 5'-triphosphate = DNA(n+1) + diphosphate. It catalyses the reaction Endonucleolytic cleavage to 5'-phosphomonoester.. The enzyme catalyses dUTP + H2O = dUMP + diphosphate + H(+). Its function is as follows. Matrix protein. Capsid protein. In terms of biological role, matrix protein p10: Matrix protein. Functionally, nucleocapsid protein p14: Nucleocapsid protein. Its function is as follows. Capsid protein p27: capsid protein. The aspartyl protease mediates proteolytic cleavages of Gag and Gag-Pol polyproteins during or shortly after the release of the virion from the plasma membrane. Cleavages take place as an ordered, step-wise cascade to yield mature proteins. This process is called maturation. Displays maximal activity during the budding process just prior to particle release from the cell. In terms of biological role, enhances the activity of the reverse transcriptase. May be part of the mature RT. Functionally, RT is a multifunctional enzyme that converts the viral dimeric RNA genome into dsDNA in the cytoplasm, shortly after virus entry into the cell. This enzyme displays a DNA polymerase activity that can copy either DNA or RNA templates, and a ribonuclease H (RNase H) activity that cleaves the RNA strand of RNA-DNA heteroduplexes in a partially processive 3' to 5' endonucleasic mode. Conversion of viral genomic RNA into dsDNA requires many steps. A tRNA binds to the primer-binding site (PBS) situated at the 5' end of the viral RNA. RT uses the 3' end of the tRNA primer to perfom a short round of RNA-dependent minus-strand DNA synthesis. The reading proceeds through the U5 region and ends after the repeated (R) region which is present at both ends of viral RNA. The portion of the RNA-DNA heteroduplex is digested by the RNase H, resulting in a ssDNA product attached to the tRNA primer. This ssDNA/tRNA hybridizes with the identical R region situated at the 3' end of viral RNA. This template exchange, known as minus-strand DNA strong stop transfer, can be either intra- or intermolecular. RT uses the 3' end of this newly synthesized short ssDNA to perfom the RNA-dependent minus-strand DNA synthesis of the whole template. RNase H digests the RNA template except for a polypurine tract (PPT) situated at the 5' end of the genome. It is not clear if both polymerase and RNase H activities are simultaneous. RNase H probably can proceed both in a polymerase-dependent (RNA cut into small fragments by the same RT performing DNA synthesis) and a polymerase-independent mode (cleavage of remaining RNA fragments by free RTs). Secondly, RT performs DNA-directed plus-strand DNA synthesis using the PPT that has not been removed by RNase H as primers. PPT and tRNA primers are then removed by RNase H. The 3' and 5' ssDNA PBS regions hybridize to form a circular dsDNA intermediate. Strand displacement synthesis by RT to the PBS and PPT ends produces a blunt ended, linear dsDNA copy of the viral genome that includes long terminal repeats (LTRs) at both ends. Its function is as follows. Catalyzes viral DNA integration into the host chromosome, by performing a series of DNA cutting and joining reactions. This is Gag-Pro-Pol polyprotein (pol) from Mammalia (SMRV-H).